Here is a 147-residue protein sequence, read N- to C-terminus: Large ribosomal subunit protein uL15 (147 aa).

Residues 1–45 form a disordered region; the sequence is MTIKLHHLRPAPGAKSDKIRVGRGEGGKRGKTAGRGTKGTKARKN. Positions 15–28 are enriched in basic and acidic residues; it reads KSDKIRVGRGEGGK.

Belongs to the universal ribosomal protein uL15 family. In terms of assembly, part of the 50S ribosomal subunit.

In terms of biological role, binds to the 23S rRNA. This Rhodococcus jostii (strain RHA1) protein is Large ribosomal subunit protein uL15.